We begin with the raw amino-acid sequence, 272 residues long: Putative MgpC-like protein MPN_366 (272 aa).

Disordered stretches follow at residues 65–84 and 171–196; these read QESQ…TSGS and GSGQ…PMPS. Over residues 72 to 84 the composition is skewed to low complexity; sequence NGSQSGSSDTSGS. The segment covering 173 to 187 has biased composition (polar residues); it reads GQESSWNSQRSQKGL.

It belongs to the MgpC family.

In Mycoplasma pneumoniae (strain ATCC 29342 / M129 / Subtype 1) (Mycoplasmoides pneumoniae), this protein is Putative MgpC-like protein MPN_366.